A 201-amino-acid polypeptide reads, in one-letter code: Adenylyl-sulfate kinase (201 aa).

Gly-35–Ser-42 contributes to the ATP binding site. The active-site Phosphoserine intermediate is Ser-109.

It belongs to the APS kinase family.

The enzyme catalyses adenosine 5'-phosphosulfate + ATP = 3'-phosphoadenylyl sulfate + ADP + H(+). The protein operates within sulfur metabolism; hydrogen sulfide biosynthesis; sulfite from sulfate: step 2/3. Functionally, catalyzes the synthesis of activated sulfate. The sequence is that of Adenylyl-sulfate kinase from Salmonella paratyphi A (strain AKU_12601).